The following is a 147-amino-acid chain: Receptor activity-modifying protein 3 (147 aa).

Residues 1–22 (MATPAQRLHLLPLLLLLCGECA) form the signal peptide. Residues 23 to 112 (QVCGCNETGM…CTVDRTHWED (90 aa)) lie on the Extracellular side of the membrane. 4 N-linked (GlcNAc...) asparagine glycosylation sites follow: Asn-28, Asn-57, Asn-70, and Asn-102. Cystine bridges form between Cys-39–Cys-71 and Cys-56–Cys-103. The chain crosses the membrane as a helical span at residues 113–137 (PPDEVLIPLIAVPVLLTVAMAGLVV). Over 138-147 (WRSKRTDRLL) the chain is Cytoplasmic.

This sequence belongs to the RAMP family. In terms of assembly, heterodimer of CALCRL and RAMP3; interaction induces allosteric modulation of CALCRL function and ligand specificity for adrenomedullin/ADM and intermedin/ADM2. Heterodimer of CALCR and RAMP3; interaction form the receptor complex AMYR3 for amylin/IAPP. Interacts with GPER1.

It localises to the cell membrane. The protein localises to the membrane. Its function is as follows. Accessory protein that interacts with and modulates the function of G-protein coupled receptors including calcitonin gene-related peptide type 1 receptor (CALCRL), calcitonin receptor (CALCR) and G-protein coupled estrogen receptor 1 (GPER1). Required for the transport of CALCRL and GPER1 receptors to the plasma membrane. Plays a role in cardioprotection by reducing cardiac hypertrophy and perivascular fibrosis in a GPER1-dependent manner. Together with CALCRL, form a receptor complex for adrenomedullin/ADM and intermedin/ADM2. Together with CALCR, act as a receptor complex for amylin/IAPP. The polypeptide is Receptor activity-modifying protein 3 (Rattus norvegicus (Rat)).